The chain runs to 411 residues: Serine hydroxymethyltransferase (411 aa).

(6S)-5,6,7,8-tetrahydrofolate contacts are provided by residues L119 and 123 to 125; that span reads GHL. Residue K228 is modified to N6-(pyridoxal phosphate)lysine. 351-353 lines the (6S)-5,6,7,8-tetrahydrofolate pocket; that stretch reads SPF.

This sequence belongs to the SHMT family. As to quaternary structure, homodimer. Requires pyridoxal 5'-phosphate as cofactor.

The protein resides in the cytoplasm. It carries out the reaction (6R)-5,10-methylene-5,6,7,8-tetrahydrofolate + glycine + H2O = (6S)-5,6,7,8-tetrahydrofolate + L-serine. It functions in the pathway one-carbon metabolism; tetrahydrofolate interconversion. The protein operates within amino-acid biosynthesis; glycine biosynthesis; glycine from L-serine: step 1/1. Functionally, catalyzes the reversible interconversion of serine and glycine with tetrahydrofolate (THF) serving as the one-carbon carrier. This reaction serves as the major source of one-carbon groups required for the biosynthesis of purines, thymidylate, methionine, and other important biomolecules. Also exhibits THF-independent aldolase activity toward beta-hydroxyamino acids, producing glycine and aldehydes, via a retro-aldol mechanism. This chain is Serine hydroxymethyltransferase, found in Clostridium beijerinckii (strain ATCC 51743 / NCIMB 8052) (Clostridium acetobutylicum).